The primary structure comprises 615 residues: Protein translocase subunit SecD (615 aa).

6 consecutive transmembrane segments (helical) span residues 10–30, 452–472, 477–497, 504–524, 546–568, and 585–605; these read YIMLVVVIIVGLLYALPNLYG, QGLEACLAGLVVSILFMIFFY, LIATSALVANLVLIVGIMSLL, MPGIAGIVLTLAVAVDANVLI, YAGAFSSIFDANITTLIKVIILY, and GVATSMFTAIIGTRAIVNLLY.

The protein belongs to the SecD/SecF family. SecD subfamily. Forms a complex with SecF. Part of the essential Sec protein translocation apparatus which comprises SecA, SecYEG and auxiliary proteins SecDF-YajC and YidC.

The protein resides in the cell inner membrane. Functionally, part of the Sec protein translocase complex. Interacts with the SecYEG preprotein conducting channel. SecDF uses the proton motive force (PMF) to complete protein translocation after the ATP-dependent function of SecA. The chain is Protein translocase subunit SecD from Salmonella choleraesuis (strain SC-B67).